A 454-amino-acid chain; its full sequence is tRNA modification GTPase MnmE (454 aa).

Positions 26, 84, and 123 each coordinate (6S)-5-formyl-5,6,7,8-tetrahydrofolate. Residues 219–378 form the TrmE-type G domain; the sequence is GLQVVIAGKP…LVDAITAHAG (160 aa). Residue Asn-229 coordinates K(+). GTP is bound by residues 229-234, 248-254, and 273-276; these read NAGKSS, TDIAGTT, and DTAG. Ser-233 contacts Mg(2+). K(+) contacts are provided by Thr-248, Ile-250, and Thr-253. Thr-254 contacts Mg(2+). Position 454 (Lys-454) interacts with (6S)-5-formyl-5,6,7,8-tetrahydrofolate.

This sequence belongs to the TRAFAC class TrmE-Era-EngA-EngB-Septin-like GTPase superfamily. TrmE GTPase family. As to quaternary structure, homodimer. Heterotetramer of two MnmE and two MnmG subunits. K(+) is required as a cofactor.

The protein localises to the cytoplasm. Functionally, exhibits a very high intrinsic GTPase hydrolysis rate. Involved in the addition of a carboxymethylaminomethyl (cmnm) group at the wobble position (U34) of certain tRNAs, forming tRNA-cmnm(5)s(2)U34. In Acinetobacter baumannii (strain ATCC 17978 / DSM 105126 / CIP 53.77 / LMG 1025 / NCDC KC755 / 5377), this protein is tRNA modification GTPase MnmE.